We begin with the raw amino-acid sequence, 236 residues long: Large ribosomal subunit protein uL1 (236 aa).

Belongs to the universal ribosomal protein uL1 family. In terms of assembly, part of the 50S ribosomal subunit.

Binds directly to 23S rRNA. The L1 stalk is quite mobile in the ribosome, and is involved in E site tRNA release. In terms of biological role, protein L1 is also a translational repressor protein, it controls the translation of the L11 operon by binding to its mRNA. This is Large ribosomal subunit protein uL1 from Corynebacterium jeikeium (strain K411).